We begin with the raw amino-acid sequence, 79 residues long: Small ribosomal subunit protein bS18 (79 aa).

The protein belongs to the bacterial ribosomal protein bS18 family. As to quaternary structure, part of the 30S ribosomal subunit. Forms a tight heterodimer with protein bS6.

Its function is as follows. Binds as a heterodimer with protein bS6 to the central domain of the 16S rRNA, where it helps stabilize the platform of the 30S subunit. This chain is Small ribosomal subunit protein bS18, found in Bacillus licheniformis (strain ATCC 14580 / DSM 13 / JCM 2505 / CCUG 7422 / NBRC 12200 / NCIMB 9375 / NCTC 10341 / NRRL NRS-1264 / Gibson 46).